Here is a 436-residue protein sequence, read N- to C-terminus: Xylose isomerase (436 aa).

Residues histidine 100 and aspartate 103 contribute to the active site. Positions 231, 267, 270, 295, 306, 308, and 338 each coordinate Mg(2+).

This sequence belongs to the xylose isomerase family. Homotetramer. Mg(2+) is required as a cofactor.

It is found in the cytoplasm. It carries out the reaction alpha-D-xylose = alpha-D-xylulofuranose. The chain is Xylose isomerase from Rhizobium etli (strain ATCC 51251 / DSM 11541 / JCM 21823 / NBRC 15573 / CFN 42).